The chain runs to 176 residues: Probable DNA-directed RNA polymerase subunit delta (176 aa).

The HTH HARE-type domain occupies 14–81 (CSMIEVVHSV…GENRWGLRSW (68 aa)). A disordered region spans residues 90-176 (EILPQPKPKK…ETEEEEEEEL (87 aa)). Acidic residues predominate over residues 106–176 (DGFDDYIEED…ETEEEEEEEL (71 aa)).

It belongs to the RpoE family. RNAP is composed of a core of 2 alpha, a beta and a beta' subunits. The core is associated with a delta subunit and one of several sigma factors.

Participates in both the initiation and recycling phases of transcription. In the presence of the delta subunit, RNAP displays an increased specificity of transcription, a decreased affinity for nucleic acids, and an increased efficiency of RNA synthesis because of enhanced recycling. This chain is Probable DNA-directed RNA polymerase subunit delta, found in Bacillus thuringiensis subsp. konkukian (strain 97-27).